Consider the following 254-residue polypeptide: Phosphomannomutase (254 aa).

The active-site Nucleophile is Asp16. Mg(2+)-binding residues include Asp16 and Asp18. The active-site Proton donor/acceptor is the Asp18. Alpha-D-mannose 1-phosphate contacts are provided by Arg25, Arg129, Arg140, Arg147, Ser185, and Asp187. Residues Asp216, Tyr228, Asp230, and Thr233 each coordinate Mg(2+).

Belongs to the eukaryotic PMM family. In terms of assembly, homodimer.

The protein localises to the cytoplasm. The catalysed reaction is alpha-D-mannose 1-phosphate = D-mannose 6-phosphate. It participates in nucleotide-sugar biosynthesis; GDP-alpha-D-mannose biosynthesis; alpha-D-mannose 1-phosphate from D-fructose 6-phosphate: step 2/2. Its function is as follows. Involved in the synthesis of the GDP-mannose and dolichol-phosphate-mannose required for a number of critical mannosyl transfer reactions. Required for maintaining N-linked glycoprotein glycosylation at the neuromuscular junction (NMJ) synaptomatrix, and thus acts in multiple pathways that prevent NMJ structural overgrowth, restrict synaptic bouton differentiation, and limit NMJ neurotransmission strength, in order to maintain viability, coordinate movement, and in adults ensure correct wing positioning. Acts in the NMJ trans-synaptic Wg pathway via glycosylation of synaptic Mmp2 which enables dlp/wg signaling during development. The sequence is that of Phosphomannomutase from Drosophila melanogaster (Fruit fly).